The primary structure comprises 503 residues: Palmitoleoyl-protein carboxylesterase NOTUM (503 aa).

A signal peptide spans 1–19 (MGGEVRVLLLLGLLHWVGG). Residues 23–53 (RKTWRRRGQQPPQPPPPPPLPQRAEVEPGAG) are disordered. Positions 33-43 (PPQPPPPPPLP) are enriched in pro residues. Ser88 is subject to Phosphoserine. Residue Asn103 is glycosylated (N-linked (GlcNAc...) asparagine). Residues Ser239, Asp347, and His396 each act as charge relay system in the active site.

Belongs to the pectinacetylesterase family. Notum subfamily. As to expression, widely expressed. Expressed in lung, ovary, kidney, liver and brain. Not detected in thymus, heart, spleen, stomach, skeletal muscle and bone marrow.

The protein localises to the secreted. It catalyses the reaction [Wnt protein]-O-(9Z)-hexadecenoyl-L-serine + H2O = [Wnt protein]-L-serine + (9Z)-hexadecenoate + H(+). Carboxylesterase that acts as a key negative regulator of the Wnt signaling pathway by specifically mediating depalmitoleoylation of WNT proteins. Serine palmitoleoylation of WNT proteins is required for efficient binding to frizzled receptors. The protein is Palmitoleoyl-protein carboxylesterase NOTUM of Mus musculus (Mouse).